The chain runs to 968 residues: RNA polymerase-associated protein RapA (968 aa).

A Helicase ATP-binding domain is found at Glu164–Asp334. ATP is bound at residue Asp177 to Thr184. Residues Asp280–His283 carry the DEAH box motif. A Helicase C-terminal domain is found at Arg490–Asp644.

The protein belongs to the SNF2/RAD54 helicase family. RapA subfamily. As to quaternary structure, interacts with the RNAP. Has a higher affinity for the core RNAP than for the holoenzyme. Its ATPase activity is stimulated by binding to RNAP.

Functionally, transcription regulator that activates transcription by stimulating RNA polymerase (RNAP) recycling in case of stress conditions such as supercoiled DNA or high salt concentrations. Probably acts by releasing the RNAP, when it is trapped or immobilized on tightly supercoiled DNA. Does not activate transcription on linear DNA. Probably not involved in DNA repair. In Yersinia pestis bv. Antiqua (strain Antiqua), this protein is RNA polymerase-associated protein RapA.